Reading from the N-terminus, the 239-residue chain is MKALIPKQHGAWAMLLIPFLLGMVKGGPVIWHIPLFLGWLFLYLAVYPVTLALKKKQSKPYQKWMCYYGFPTCCFLMISVFHKPPLIWVGVSLLPLFLIHMYFARRKNERALLNDVAGVLFFCSGGFASCWLGMGTLDGWAWFIFLQSALFFIGSSFYVKSVIRERKNRAFAYWSWGYHLLLPFLSALFGAGWAFLAFIPSSLRAWFFHGRDWPVKTIGILEIVNACFFLAVMCLFITR.

The next 8 membrane-spanning stretches (helical) occupy residues 4–24 (LIPK…LGMV), 29–49 (VIWH…VYPV), 61–81 (YQKW…ISVF), 84–104 (PPLI…MYFA), 116–136 (VAGV…GMGT), 139–159 (GWAW…SFYV), 180–200 (LLLP…AFIP), and 218–238 (IGIL…LFIT).

It to H.influenzae HI_1626.

Its subcellular location is the cell membrane. This is an uncharacterized protein from Bacillus subtilis (strain 168).